We begin with the raw amino-acid sequence, 328 residues long: GMP reductase (328 aa).

The active-site Thioimidate intermediate is Cys-176. Position 205–228 (205–228 (IIADGGIRTHGDIAKSIRFGASMV)) interacts with NADP(+).

This sequence belongs to the IMPDH/GMPR family. GuaC type 2 subfamily.

The enzyme catalyses IMP + NH4(+) + NADP(+) = GMP + NADPH + 2 H(+). Its function is as follows. Catalyzes the irreversible NADPH-dependent deamination of GMP to IMP. It functions in the conversion of nucleobase, nucleoside and nucleotide derivatives of G to A nucleotides, and in maintaining the intracellular balance of A and G nucleotides. This is GMP reductase from Streptococcus pneumoniae (strain Hungary19A-6).